Consider the following 388-residue polypeptide: MEPSPTTGGSETTRLVGPRDRGGAGGGLRLKSLFTEAPEPLPEEPKPVEMSFHHCHRDPLPQPGLTPERMQAQRQLCTACAVCCVFMAGEVVGGYLAHSLAIMTDAAHLLADVGSMMGSLFSLWLSTRPATRTMTFGWHRSETLGALASVVSLWMVTGILLYLAFIRLLHSDYHIEGGAMLLTASIAVCANLLMAFVLHQAGPPHSHGSRGAEYAPLEEGSGEPLPLGNTSVRAAFVHVLGDLLQSLGVLIASILIYFKPQYKAADPISTFLFSICALGSTAPTLRDVLRVLMEGTPRSVSFEPVRDTLLSVPGVRAIHELHLWSLTFTHYVASAHLAIDSTADPEAVLAEATSRLHSRFGFSSCTLQVEQYQPEMAQCLRCQEPPQA.

A compositionally biased stretch (polar residues) spans 1-13 (MEPSPTTGGSETT). 2 disordered regions span residues 1-30 (MEPS…GLRL) and 35-54 (TEAP…SFHH). At 1–75 (MEPSPTTGGS…TPERMQAQRQ (75 aa)) the chain is on the cytoplasmic side. A helical membrane pass occupies residues 76-96 (LCTACAVCCVFMAGEVVGGYL). Residues 97–105 (AHSLAIMTD) lie on the Lumenal side of the membrane. A helical transmembrane segment spans residues 106 to 126 (AAHLLADVGSMMGSLFSLWLS). His108 and Asp112 together coordinate Zn(2+). Topologically, residues 127–145 (TRPATRTMTFGWHRSETLG) are cytoplasmic. The helical transmembrane segment at 146-166 (ALASVVSLWMVTGILLYLAFI) threads the bilayer. Over 167 to 177 (RLLHSDYHIEG) the chain is Lumenal. A helical transmembrane segment spans residues 178-198 (GAMLLTASIAVCANLLMAFVL). Residues 199-235 (HQAGPPHSHGSRGAEYAPLEEGSGEPLPLGNTSVRAA) are Cytoplasmic-facing. A helical transmembrane segment spans residues 236 to 256 (FVHVLGDLLQSLGVLIASILI). The Zn(2+) site is built by His238 and Asp242. Topologically, residues 257–264 (YFKPQYKA) are lumenal. The helical transmembrane segment at 265-285 (ADPISTFLFSICALGSTAPTL) threads the bilayer. Residues 286–388 (RDVLRVLMEG…CLRCQEPPQA (103 aa)) are Cytoplasmic-facing.

It belongs to the cation diffusion facilitator (CDF) transporter (TC 2.A.4) family. SLC30A subfamily. Homodimer. Homodimerization could regulate efficiency of zinc transport. Interacts with TMEM163.

It is found in the cytoplasmic vesicle. The protein resides in the secretory vesicle. The protein localises to the synaptic vesicle membrane. Its subcellular location is the synapse. It localises to the synaptosome. It is found in the late endosome membrane. The protein resides in the lysosome membrane. The catalysed reaction is Zn(2+)(in) + 2 H(+)(out) = Zn(2+)(out) + 2 H(+)(in). Its function is as follows. Probable proton-coupled zinc ion antiporter mediating the import of zinc from cytoplasm into synaptic vesicles and participating to cellular zinc ion homeostasis in the brain. The polypeptide is Probable proton-coupled zinc antiporter SLC30A3 (Bos taurus (Bovine)).